Here is a 238-residue protein sequence, read N- to C-terminus: MKKQLYQLSNTDIAFPPIECALDSPDGLLAIGGDLSLARLSNAYNNGIFPWFSEDEPIMWWSPSERGIVELDNFHISKSLRKHLKKHPVTVTINNAFIEVIEACCEQRIDTDGTWITSDMLTAYINAHNAGIAHSVEVWREGELAGGLYGIMQNGVFCGESMFHHQTNCSKLAMWALVNWLKRHNAHFIDCQLENPYLMSLGATVIPRPAFLAKLHAAQNYKVDPAMWIPQELNAIYE.

It belongs to the L/F-transferase family.

It is found in the cytoplasm. The enzyme catalyses N-terminal L-lysyl-[protein] + L-leucyl-tRNA(Leu) = N-terminal L-leucyl-L-lysyl-[protein] + tRNA(Leu) + H(+). The catalysed reaction is N-terminal L-arginyl-[protein] + L-leucyl-tRNA(Leu) = N-terminal L-leucyl-L-arginyl-[protein] + tRNA(Leu) + H(+). It catalyses the reaction L-phenylalanyl-tRNA(Phe) + an N-terminal L-alpha-aminoacyl-[protein] = an N-terminal L-phenylalanyl-L-alpha-aminoacyl-[protein] + tRNA(Phe). Its function is as follows. Functions in the N-end rule pathway of protein degradation where it conjugates Leu, Phe and, less efficiently, Met from aminoacyl-tRNAs to the N-termini of proteins containing an N-terminal arginine or lysine. The sequence is that of Leucyl/phenylalanyl-tRNA--protein transferase from Pseudoalteromonas translucida (strain TAC 125).